Reading from the N-terminus, the 373-residue chain is MSNQDFYATLGVARTATDDEIKKAYRKLAMKYHPDRNPDNKEAEEKFKEVQKAYETLSDKEKRAMYDQYGHAAFEGGGQGGFGGFGGFGGAQGFDFGDIFSQMFGGGSGRAQPDYQGEDVQVGIEITLEEAAKGVKKRINIPTYEACDVCNGSGAKPGTSPETCPTCKGSGTVHIQQAIFRMQQTCPTCHGAGKHIKEPCVKCRGAGRNKAVKTVEVNIPAGIDDGQRIRLSGEGGPGMHGAPAGDLYVTVRIRAHKIFQRDGLDLHCELPISFATAALGGELEVPTLDGKVKLTVPKETQTGRRMRVKGKGVKSLRSSATGDLYCHIVVETPVNLTDRQKELLEEFERISTGLENQTPRKKSFLDKLRDLFD.

One can recognise a J domain in the interval 5–70; sequence DFYATLGVAR…EKRAMYDQYG (66 aa). Residues 134–212 form a CR-type zinc finger; it reads GVKKRINIPT…CRGAGRNKAV (79 aa). Zn(2+) is bound by residues Cys-147, Cys-150, Cys-164, Cys-167, Cys-186, Cys-189, Cys-200, and Cys-203. CXXCXGXG motif repeat units lie at residues 147–154, 164–171, 186–193, and 200–207; these read CDVCNGSG, CPTCKGSG, CPTCHGAG, and CVKCRGAG.

The protein belongs to the DnaJ family. Homodimer. It depends on Zn(2+) as a cofactor.

It is found in the cytoplasm. In terms of biological role, participates actively in the response to hyperosmotic and heat shock by preventing the aggregation of stress-denatured proteins and by disaggregating proteins, also in an autonomous, DnaK-independent fashion. Unfolded proteins bind initially to DnaJ; upon interaction with the DnaJ-bound protein, DnaK hydrolyzes its bound ATP, resulting in the formation of a stable complex. GrpE releases ADP from DnaK; ATP binding to DnaK triggers the release of the substrate protein, thus completing the reaction cycle. Several rounds of ATP-dependent interactions between DnaJ, DnaK and GrpE are required for fully efficient folding. Also involved, together with DnaK and GrpE, in the DNA replication of plasmids through activation of initiation proteins. This Neisseria meningitidis serogroup C (strain 053442) protein is Chaperone protein DnaJ.